An 86-amino-acid polypeptide reads, in one-letter code: Large ribosomal subunit protein bL31B (86 aa).

Belongs to the bacterial ribosomal protein bL31 family. Type B subfamily. In terms of assembly, part of the 50S ribosomal subunit.

In Cupriavidus metallidurans (strain ATCC 43123 / DSM 2839 / NBRC 102507 / CH34) (Ralstonia metallidurans), this protein is Large ribosomal subunit protein bL31B.